The chain runs to 614 residues: DNA double-strand break repair protein Mre11 (614 aa).

Mn(2+) contacts are provided by Asp-12, His-14, Asp-53, and Asn-88. His-89 (proton donor) is an active-site residue. The Mn(2+) site is built by His-158, Asp-189, and His-191. Disordered stretches follow at residues 393–434 (ASPI…SPDI) and 487–614 (ALKK…GDYL). A compositionally biased stretch (low complexity) spans 411–425 (PVSSADSVSAVSPES). Composition is skewed to basic and acidic residues over residues 487–502 (ALKKSYEAPDKVREAP), 535–558 (VPEKGGERTELEDDAVNKTEKETG), and 568–591 (GSEKEDADRIEKPAHVPDKAEKPV).

Belongs to the MRE11/RAD32 family. As to quaternary structure, homodimer. Forms a heterotetramer composed of two Mre11 subunits and two Rad50 subunits. The cofactor is Mn(2+).

Nuclease activity is regulated by Rad50. Functionally, part of the Rad50/Mre11 complex, which is involved in the early steps of DNA double-strand break (DSB) repair. The complex may facilitate opening of the processed DNA ends to aid in the recruitment of HerA and NurA. Mre11 binds to DSB ends and has both double-stranded 3'-5' exonuclease activity and single-stranded endonuclease activity. This Methanosarcina acetivorans (strain ATCC 35395 / DSM 2834 / JCM 12185 / C2A) protein is DNA double-strand break repair protein Mre11.